A 395-amino-acid polypeptide reads, in one-letter code: Phosphoglycerate kinase (395 aa).

Residues 21-23 (DFN), R36, 59-62 (HLGR), R120, and R153 each bind substrate. ATP-binding positions include K203, G294, E325, and 351 to 354 (GGDS).

Belongs to the phosphoglycerate kinase family. As to quaternary structure, monomer.

It localises to the cytoplasm. The enzyme catalyses (2R)-3-phosphoglycerate + ATP = (2R)-3-phospho-glyceroyl phosphate + ADP. It participates in carbohydrate degradation; glycolysis; pyruvate from D-glyceraldehyde 3-phosphate: step 2/5. This is Phosphoglycerate kinase from Finegoldia magna (strain ATCC 29328 / DSM 20472 / WAL 2508) (Peptostreptococcus magnus).